Reading from the N-terminus, the 148-residue chain is Large ribosomal subunit protein bL9 (148 aa).

It belongs to the bacterial ribosomal protein bL9 family.

Binds to the 23S rRNA. In Acinetobacter baumannii (strain AB307-0294), this protein is Large ribosomal subunit protein bL9.